Reading from the N-terminus, the 485-residue chain is Ribosomal protein S6 kinase beta-2 (485 aa).

Residues 1 to 26 (MAAVFDLDLETEEGSEGEGEPEFSPA) are disordered. Positions 7–21 (LDLETEEGSEGEGEP) are enriched in acidic residues. Serine 15 is subject to Phosphoserine. Positions 67–328 (FELLSVLGKG…AADVQRHPFF (262 aa)) constitute a Protein kinase domain. ATP-binding positions include 73–81 (LGKGGYGKV) and lysine 99. Residue aspartate 194 is the Proton acceptor of the active site. Residues 329 to 399 (RHINWDDLLA…VAPSVLDSIK (71 aa)) enclose the AGC-kinase C-terminal domain. The segment at 407 to 485 (KLRSPRRLNS…SKKGRGRSGR (79 aa)) is disordered. At serine 417 the chain carries Phosphoserine. The residue at position 420 (threonine 420) is a Phosphothreonine. Serine 423 is subject to Phosphoserine. Pro residues predominate over residues 436 to 469 (SPGPPEPMEPSLPPLLPSPPSPPPTSTAPLPIRP). The short motif at 474–480 (KKSKKGR) is the Nuclear localization signal element. Over residues 474-485 (KKSKKGRGRSGR) the composition is skewed to basic residues. Residue serine 476 is modified to Phosphoserine; by PKC.

Belongs to the protein kinase superfamily. AGC Ser/Thr protein kinase family. S6 kinase subfamily. Post-translationally, phosphorylated and activated by MTOR. Phosphorylation by PKC within the NLS in response to mitogenic stimuli causes cytoplasmic retention.

It localises to the cytoplasm. The protein localises to the nucleus. The enzyme catalyses L-seryl-[protein] + ATP = O-phospho-L-seryl-[protein] + ADP + H(+). It catalyses the reaction L-threonyl-[protein] + ATP = O-phospho-L-threonyl-[protein] + ADP + H(+). Functionally, phosphorylates specifically ribosomal protein S6. Seems to act downstream of mTOR signaling in response to growth factors and nutrients to promote cell proliferation, cell growth and cell cycle progression in an alternative pathway regulated by MEAK7. This is Ribosomal protein S6 kinase beta-2 (Rps6kb2) from Mus musculus (Mouse).